A 643-amino-acid polypeptide reads, in one-letter code: Phosphomethylpyrimidine synthase (643 aa).

Residues Asn-221, Met-250, Tyr-279, His-315, 335–337, 376–379, and Glu-415 each bind substrate; these read SRG and DGLR. Zn(2+) is bound at residue His-419. A substrate-binding site is contributed by Tyr-442. His-483 contacts Zn(2+). [4Fe-4S] cluster contacts are provided by Cys-563, Cys-566, and Cys-571.

This sequence belongs to the ThiC family. As to quaternary structure, homodimer. It depends on [4Fe-4S] cluster as a cofactor.

The enzyme catalyses 5-amino-1-(5-phospho-beta-D-ribosyl)imidazole + S-adenosyl-L-methionine = 4-amino-2-methyl-5-(phosphooxymethyl)pyrimidine + CO + 5'-deoxyadenosine + formate + L-methionine + 3 H(+). Its pathway is cofactor biosynthesis; thiamine diphosphate biosynthesis. Catalyzes the synthesis of the hydroxymethylpyrimidine phosphate (HMP-P) moiety of thiamine from aminoimidazole ribotide (AIR) in a radical S-adenosyl-L-methionine (SAM)-dependent reaction. The polypeptide is Phosphomethylpyrimidine synthase (Nitrobacter hamburgensis (strain DSM 10229 / NCIMB 13809 / X14)).